A 1596-amino-acid polypeptide reads, in one-letter code: MFSGPSGHAHTISYGGGIGLGTGGGGGSGGSGSGSQGGGGGIGIGGGGVAGLQDCDGYDFTKCENAARWRGLFTPSLKKVLEQVHPRVTAKEDALLYVEKLCLRLLAMLCAKPLPHSVQDVEEKVNKSFPAPIDQWALNEAKEVINSKKRKSVLPTEKVHTLLQKDVLQYKIDSSVSAFLVAVLEYISADILKMAGDYVIKIAHCEITKEDIEVVMNADRVLMDMLNQSEAHILPSPLSLPAQRASATYEETVKELIHDEKQYQRDLHMIIRVFREELVKIVSDPRELEPIFSNIMDIYEVTVTLLGSLEDVIEMSQEQSAPCVGSCFEELAEAEEFDVYKKYAYDVTSQASRDALNNLLSKPGASSLTTAGHGFRDAVKYYLPKLLLVPICHAFVYFDYIKHLKDLSSSQDDIESFEQVQGLLHPLHCDLEKVMASLSKERQVPVSGRVRRQLAIERTRELQMKVEHWEDKDVGQNCNEFIREDSLSKLGSGKRIWSERKVFLFDGLMVLCKANTKKQTPSAGATAYDYRLKEKYFMRRVDINDRPDSDDLKNSFELAPRMQPPIVLTAKNAQHKHDWMADLLMVITKSMLDRHLDSILQDIERKHPLRMPSPEIYKFAVPDSGDNIVLEERESAGVPMIKGATLCKLIERLTYHIYADPTFVRTFLTTYRYFCSPQQLLQLLVERFNIPDPSLVYQDTGTAGAGGMGGVGGDKEHKNSHREDWKRYRKEYVQPVQFRVLNVLRHWVDHHFYDFEKDPMLLEKLLNFLEHVNGKSMRKWVDSVLKIVQRKNEQEKSNKKIVYAYGHDPPPIEHHLSVPNDEITLLTLHPLELARQLTLLEFEMYKNVKPSELVGSPWTKKDKEVKSPNLLKIMKHTTNVTRWIEKSITEAENYEERLAIMQRAIEVMMVMLELNNFNGILSIVAAMGTASVYRLRWTFQGLPERYRKFLEECRELSDDHLKKYQERLRSINPPCVPFFGRYLTNILHLEEGNPDLLANTELINFSKRRKVAEIIGEIQQYQNQPYCLNEESTIRQFFEQLDPFNGLSDKQMSDYLYNESLRIEPRGCKTVPKFPRKWPHIPLKSPGIKPRRQNQTNSSSKLSNSTSSVAAAAAASSTATSIATASAPSLHASSIMDAPTAAAANAGSGTLAGEQSPQHNPHAFSVFAPVIIPERNTSSWSGTPQHTRTDQNNGEVSVPAPHLPKKPGAHVWANNNSTLASASAMDVVFSPALPEHLPPQSLPDSNPFASDTEAPPSPLPKLVVSPRHETGNRSPFHGRMQNSPTHSTASTVTLTGMSTSGGEEFCAGGFYFNSAHQGQPGAVPISPHVNVPMATNMEYRAVPPPLPPRRKERTESCADMAQKRQAPDAPTLPPRDGELSPPPIPPRLNHSTGISYLRQSHGKSKEFVGNSSLLLPNTSSIMIRRNSAIEKRAAATSQPNQAAAGPISTTLVTVSQAVATDEPLPLPISPAASSSTTTSPLTPAMSPMSPNIPSHPVESTSSSYAHQLRMRQQQQQQTHPAIYSQHHQHHATHLPHHPHQHHSNPTQSRSSPKEFFPIATSLEGTPKLPPKPSLSANFYNNPDKGTMFLYPSTNEE.

The DH domain occupies Thr-248–Val-434. Residues Glu-480–Thr-588 enclose the PH domain. The region spanning Gly-637–Asn-792 is the N-terminal Ras-GEF domain. Positions His-829–Arg-1066 constitute a Ras-GEF domain. 5 disordered regions span residues Lys-1073–Ser-1105, Arg-1175–Trp-1212, Glu-1235–Thr-1291, Arg-1340–Thr-1392, and Pro-1465–Glu-1596. Low complexity predominate over residues Thr-1096 to Ser-1105. Polar residues-rich tracts occupy residues Arg-1175–Glu-1195 and Met-1280–Thr-1291. Over residues Glu-1352–Ala-1366 the composition is skewed to basic and acidic residues. Over residues Ser-1469–Ser-1489 the composition is skewed to low complexity. Over residues His-1526–His-1542 the composition is skewed to basic residues. Residues Ser-1550 and Ser-1551 each carry the phosphoserine modification.

May form a complex with sevenless and DRK.

Functionally, promotes the exchange of Ras-bound GDP by GTP. Functions in signaling pathways initiated by the sevenless and epidermal growth factor receptor tyrosine kinases; implies a role for the ras pathway in neuronal development. In Drosophila melanogaster (Fruit fly), this protein is Protein son of sevenless (Sos).